The sequence spans 101 residues: NADH-quinone oxidoreductase subunit K (101 aa).

A run of 3 helical transmembrane segments spans residues 4–24, 30–50, and 61–81; these read LTHY…GIFM, LVLL…FIAF, and IFVF…LAIM.

It belongs to the complex I subunit 4L family. NDH-1 is composed of 14 different subunits. Subunits NuoA, H, J, K, L, M, N constitute the membrane sector of the complex.

The protein resides in the cell inner membrane. The catalysed reaction is a quinone + NADH + 5 H(+)(in) = a quinol + NAD(+) + 4 H(+)(out). Functionally, NDH-1 shuttles electrons from NADH, via FMN and iron-sulfur (Fe-S) centers, to quinones in the respiratory chain. The immediate electron acceptor for the enzyme in this species is believed to be ubiquinone. Couples the redox reaction to proton translocation (for every two electrons transferred, four hydrogen ions are translocated across the cytoplasmic membrane), and thus conserves the redox energy in a proton gradient. This chain is NADH-quinone oxidoreductase subunit K, found in Neisseria meningitidis serogroup B (strain ATCC BAA-335 / MC58).